The chain runs to 411 residues: 4-coumarate--CoA ligase (411 aa).

This sequence belongs to the ATP-dependent AMP-binding enzyme family.

The catalysed reaction is (E)-4-coumarate + ATP + CoA = (E)-4-coumaroyl-CoA + AMP + diphosphate. In terms of biological role, converts p-coumaric acid into p-coumaryl CoA. This is necessary for the activation of the photoactive yellow protein (PYP) chromophore. This chain is 4-coumarate--CoA ligase (pcl), found in Cereibacter sphaeroides (strain ATCC 17023 / DSM 158 / JCM 6121 / CCUG 31486 / LMG 2827 / NBRC 12203 / NCIMB 8253 / ATH 2.4.1.) (Rhodobacter sphaeroides).